The primary structure comprises 217 residues: Small ribosomal subunit protein uS3 (217 aa).

Positions 24-93 (IKEFLEYKLS…NPQIDVIDVS (70 aa)) constitute a KH type-2 domain.

The protein belongs to the universal ribosomal protein uS3 family. In terms of assembly, part of the 30S ribosomal subunit.

Functionally, binds the lower part of the 30S subunit head. This is Small ribosomal subunit protein uS3 from Pyrobaculum islandicum (strain DSM 4184 / JCM 9189 / GEO3).